The following is a 317-amino-acid chain: 4-diphosphocytidyl-2-C-methyl-D-erythritol kinase (317 aa).

Lysine 11 is an active-site residue. Position 99 to 109 (99 to 109) interacts with ATP; the sequence is PVAAGLAGGST. Residue aspartate 141 is part of the active site.

It belongs to the GHMP kinase family. IspE subfamily.

It catalyses the reaction 4-CDP-2-C-methyl-D-erythritol + ATP = 4-CDP-2-C-methyl-D-erythritol 2-phosphate + ADP + H(+). It functions in the pathway isoprenoid biosynthesis; isopentenyl diphosphate biosynthesis via DXP pathway; isopentenyl diphosphate from 1-deoxy-D-xylulose 5-phosphate: step 3/6. In terms of biological role, catalyzes the phosphorylation of the position 2 hydroxy group of 4-diphosphocytidyl-2C-methyl-D-erythritol. This chain is 4-diphosphocytidyl-2-C-methyl-D-erythritol kinase, found in Nostoc punctiforme (strain ATCC 29133 / PCC 73102).